The following is a 144-amino-acid chain: Protein archease (144 aa).

Ca(2+) is bound by residues Asp-14, Asp-143, and Ile-144.

This sequence belongs to the archease family.

Its function is as follows. Activates the tRNA-splicing ligase complex by facilitating the enzymatic turnover of catalytic subunit RtcB. Acts by promoting the guanylylation of RtcB, a key intermediate step in tRNA ligation. Can also alter the NTP specificity of RtcB such that ATP, dGTP or ITP is used efficiently. The sequence is that of Protein archease from Aeropyrum pernix (strain ATCC 700893 / DSM 11879 / JCM 9820 / NBRC 100138 / K1).